We begin with the raw amino-acid sequence, 614 residues long: Dihydroxy-acid dehydratase (614 aa).

D81 contributes to the Mg(2+) binding site. C122 provides a ligand contact to [2Fe-2S] cluster. Positions 123 and 124 each coordinate Mg(2+). N6-carboxylysine is present on K124. C193 lines the [2Fe-2S] cluster pocket. E489 serves as a coordination point for Mg(2+). S515 (proton acceptor) is an active-site residue.

Belongs to the IlvD/Edd family. As to quaternary structure, homodimer. [2Fe-2S] cluster is required as a cofactor. Requires Mg(2+) as cofactor.

The enzyme catalyses (2R)-2,3-dihydroxy-3-methylbutanoate = 3-methyl-2-oxobutanoate + H2O. It catalyses the reaction (2R,3R)-2,3-dihydroxy-3-methylpentanoate = (S)-3-methyl-2-oxopentanoate + H2O. It functions in the pathway amino-acid biosynthesis; L-isoleucine biosynthesis; L-isoleucine from 2-oxobutanoate: step 3/4. Its pathway is amino-acid biosynthesis; L-valine biosynthesis; L-valine from pyruvate: step 3/4. Functions in the biosynthesis of branched-chain amino acids. Catalyzes the dehydration of (2R,3R)-2,3-dihydroxy-3-methylpentanoate (2,3-dihydroxy-3-methylvalerate) into 2-oxo-3-methylpentanoate (2-oxo-3-methylvalerate) and of (2R)-2,3-dihydroxy-3-methylbutanoate (2,3-dihydroxyisovalerate) into 2-oxo-3-methylbutanoate (2-oxoisovalerate), the penultimate precursor to L-isoleucine and L-valine, respectively. The polypeptide is Dihydroxy-acid dehydratase (Marinomonas sp. (strain MWYL1)).